A 184-amino-acid chain; its full sequence is MLRRRGFCCCSGAPAAAAAALLLLAVAAAAPRAAGFHLGGDESVLVRGMLAAIRREQAEAEDAARFAVAEYNKNQGAELEFARIVKAKRQVVTGTLHDLMLEVVDSGKKSLYSAKVWVKPWLDFKAVVEFRHVGDSQSQSATAADDNAGQDTADPTVASRNDLHNTENNKVSVVLSTFSQTYSV.

The N-terminal stretch at 1–35 is a signal peptide; the sequence is MLRRRGFCCCSGAPAAAAAALLLLAVAAAAPRAAG. A Cystatin domain is found at 48-134; the sequence is GMLAAIRREQ…KAVVEFRHVG (87 aa). The short motif at 90–94 is the Secondary area of contact element; it reads QVVTG. Residues 138-165 are disordered; that stretch reads SQSATAADDNAGQDTADPTVASRNDLHN.

It belongs to the cystatin family. Phytocystatin subfamily.

It is found in the secreted. Functionally, specific inhibitor of cysteine proteinases. Probably involved in the regulation of endogenous processes and in defense against pests and pathogens. The polypeptide is Cysteine proteinase inhibitor 3 (Oryza sativa subsp. japonica (Rice)).